Consider the following 6668-residue polypeptide: Centrosome-associated protein CEP250 (6668 aa).

20 coiled-coil regions span residues 562–589 (KAFH…LQQD), 632–666 (TREL…LRAS), 873–988 (HTEC…LRSS), 1042–1087 (LRMS…HEAA), 1252–1307 (VEDL…AVSR), 1333–1427 (LESL…LEKK), 1501–1538 (RPAA…LGTQ), 1594–1688 (REAL…SEVA), 1896–1930 (HDIL…TTEK), 1975–2224 (EETL…AKQS), 2298–3272 (AEDE…LKME), 3298–3436 (QQEL…SRAE), 3526–3599 (LVQL…AKEE), 3697–3773 (CASL…EERR), 3856–4137 (TEML…VEAE), 4170–4486 (RRKL…LRER), 4515–5078 (LETL…FRRR), 5165–5202 (LASL…QETL), 5298–5731 (LREK…QHRV), and 5927–6119 (TQAL…LWRQ).

Post-translationally, proteolytically cleaved; only the full-length form localizes to the inner core, while processed version also localizes to the outer core during the onset of cell division.

The protein resides in the cytoplasm. It localises to the cytoskeleton. It is found in the microtubule organizing center. Its subcellular location is the centrosome. Its function is as follows. Part of the centrosome inner core complex. Required for the linking of centrosomal inner and outer cores. This chain is Centrosome-associated protein CEP250, found in Toxoplasma gondii (strain ATCC 50611 / Me49).